Here is a 563-residue protein sequence, read N- to C-terminus: Endogenous retroviral envelope protein HEMO (563 aa).

The signal sequence occupies residues 1 to 26 (MGSLSNYALLQLTLTAFLTILVQPQH). At 27–488 (LLAPVFRTLS…IFAKVGDWFR (462 aa)) the chain is on the extracellular side. Asparagine 122 and asparagine 192 each carry an N-linked (GlcNAc...) asparagine glycan. The chain crosses the membrane as a helical span at residues 489–509 (SWGYVLLIVLFCLFIFVLIYV). Topologically, residues 510-563 (RVFRKSRRSLNSQPLNLALSPQQSAQLLVSETSCQVSNRAMKGLTTHQYDTSLL) are cytoplasmic.

Belongs to the gamma type-C retroviral envelope protein family. In terms of processing, N-glycosylated. Cleaved by some metalloproteinase at 432-Gln-Arg-433 (mainly) or 433-Arg-Gln-434, leading to release the secreted form (Endogenous retroviral envelope protein HEMO, secreted form) in the extracellular medium. Expressed at high level in the placenta and stem cells (at protein level). Also expressed in the kidney but at a lower level. Endogenous retroviral envelope protein HEMO, secreted form: Present in the blood of pregnant women (at protein level).

It is found in the cell membrane. It localises to the secreted. In terms of biological role, endogenous envelope proteins originate from retroviral envelope proteins, which mediate receptor recognition and membrane fusion during early infection. Endogenous envelope proteins may have kept, lost or modified their original function during evolution. The polypeptide is Endogenous retroviral envelope protein HEMO (Homo sapiens (Human)).